We begin with the raw amino-acid sequence, 785 residues long: MAGTPAPNSHRKQSGGLEPFPGLSRSIENPPSKRARSFSETTVPDPEDPFGEHAEFTADDLEELDILASQALSQCPVAPRNLSSAHKVRRLDGLPNSPIRKSREDIPVKDNFELEVLQIQYKELKEKLKAMEEEILIKNGEIKILRDSLRQTESVLEEQKRSHFLLEQEKTQALSEKEKEFSRKLQSLQSELQFKDAEMNELRTKSQSNGRTNKPAAPSVSHVSPRKGSSVVLKSEACSPHVGKTTFPTKESFSANTPLFHPCQTEAGHRFLVGQEVSDNKNHSLGGSLMKQDVQQRILADGWMQRKDAQGSILINLLLKQPLVPGSSLGLCHLLSSCPEVPTGTLLQPPGLSTLPGTSGLRTISSSDGPFSPSALREAQNLAFTGLNLVARTESSHDGDMAGRRVFPLHQLPGAVHLLPLVQFFVGLHCQALQDLAPAKKSGVPGDSATHTSCMSSGVEASPEDSIHGLESFSVASLSVLQNLVCHSGAVVCLLLSGMGTEAAAREGNLVQTCADTTSASREDAHDQDQHPLLKMLLQLMASSSAASGHFQASVLGLCLKVLVKLAENASSDLLPRFSCVFPVLPQCLGSALPLPCVLLAVELLSVLLDHDSLAWQLCSHPEGCLLLRLYMYITSRPDRTASETQWLQLEQEVVWLLAKLSVQSPAPAGIGSDCHCNVEAVRALTVMLHRQWLTVRRAGGPRTHQQKQTIRCLRDTVLLLHSLSQKDKLFTVHCVEVLHQYDQVMPGVSMLIRALPDVTDCEEAALDDLCAAETDLEDSEMDCN.

The interval 1–53 (MAGTPAPNSHRKQSGGLEPFPGLSRSIENPPSKRARSFSETTVPDPEDPFGEH) is disordered. Residues 108–209 (VKDNFELEVL…NELRTKSQSN (102 aa)) are a coiled coil. Residues 118–156 (QIQYKELKEKLKAMEEEILIKNGEIKILRDSLRQTESVL) form an interaction with CINP region. Positions 201 to 227 (ELRTKSQSNGRTNKPAAPSVSHVSPRK) are disordered. The EEXXXDL motif motif lies at 763-770 (EEAALDDL).

The protein belongs to the ATRIP family. In terms of assembly, heterodimer with ATR. The heterodimer binds the RPA complex and is then recruited to single-stranded DNA. Interacts with CINP. Interacts with ATR. In terms of processing, phosphorylated by ATR.

The protein localises to the nucleus. In terms of biological role, required for checkpoint signaling after DNA damage. Required for ATR expression, possibly by stabilizing the protein. This Mus musculus (Mouse) protein is ATR-interacting protein (Atrip).